We begin with the raw amino-acid sequence, 147 residues long: Hemoglobin subunit beta-1 (147 aa).

Positions 3-147 (EWTATERTHI…VVSALGRQYH (145 aa)) constitute a Globin domain. The heme b site is built by histidine 64 and histidine 93.

Belongs to the globin family. In terms of assembly, hb 1 is a heterotetramer of two alpha-1 and two beta-1 chains. Hb 2 is a heterotetramer of two alpha-2 and two beta-1 chains. Red blood cells.

Functionally, involved in oxygen transport from gills to the various peripheral tissues. In Boreogadus saida (Polar cod), this protein is Hemoglobin subunit beta-1 (hbb1).